The primary structure comprises 306 residues: Non-structural protein 3 (306 aa).

This is Non-structural protein 3 (Segment-7) from Banna virus (BAV).